The primary structure comprises 204 residues: Ras-related protein RABG1 (204 aa).

Position 12 to 19 (12 to 19) interacts with GTP; the sequence is GDSGVGKT. Positions 34–42 match the Effector region motif; that stretch reads HNSTIYVDL. Residues 60 to 64, 122 to 125, and 155 to 156 contribute to the GTP site; these read DTAGQ, NKTD, and SA. S-geranylgeranyl cysteine attachment occurs at residues Cys-202 and Cys-204. Cys-204 is subject to Cysteine methyl ester.

It belongs to the small GTPase superfamily. Rab family.

It localises to the cell membrane. Intracellular vesicle trafficking and protein transport. The polypeptide is Ras-related protein RABG1 (RABG1) (Arabidopsis thaliana (Mouse-ear cress)).